We begin with the raw amino-acid sequence, 458 residues long: Methylenetetrahydrofolate--tRNA-(uracil-5-)-methyltransferase TrmFO (458 aa).

11 to 16 (GGGMAG) is a binding site for FAD.

This sequence belongs to the MnmG family. TrmFO subfamily. It depends on FAD as a cofactor.

The protein localises to the cytoplasm. The catalysed reaction is uridine(54) in tRNA + (6R)-5,10-methylene-5,6,7,8-tetrahydrofolate + NADH + H(+) = 5-methyluridine(54) in tRNA + (6S)-5,6,7,8-tetrahydrofolate + NAD(+). It carries out the reaction uridine(54) in tRNA + (6R)-5,10-methylene-5,6,7,8-tetrahydrofolate + NADPH + H(+) = 5-methyluridine(54) in tRNA + (6S)-5,6,7,8-tetrahydrofolate + NADP(+). Catalyzes the folate-dependent formation of 5-methyl-uridine at position 54 (M-5-U54) in all tRNAs. This is Methylenetetrahydrofolate--tRNA-(uracil-5-)-methyltransferase TrmFO from Jannaschia sp. (strain CCS1).